The following is a 239-amino-acid chain: Pyridoxine 5'-phosphate synthase (239 aa).

A 3-amino-2-oxopropyl phosphate-binding site is contributed by asparagine 7. 9–10 (DH) provides a ligand contact to 1-deoxy-D-xylulose 5-phosphate. Arginine 18 is a binding site for 3-amino-2-oxopropyl phosphate. Histidine 43 serves as the catalytic Proton acceptor. 1-deoxy-D-xylulose 5-phosphate is bound by residues arginine 45 and histidine 50. The active-site Proton acceptor is glutamate 70. A 1-deoxy-D-xylulose 5-phosphate-binding site is contributed by threonine 100. Residue histidine 191 is the Proton donor of the active site. Residues glycine 192 and 213-214 (GH) each bind 3-amino-2-oxopropyl phosphate.

It belongs to the PNP synthase family. As to quaternary structure, homooctamer; tetramer of dimers.

It is found in the cytoplasm. The enzyme catalyses 3-amino-2-oxopropyl phosphate + 1-deoxy-D-xylulose 5-phosphate = pyridoxine 5'-phosphate + phosphate + 2 H2O + H(+). The protein operates within cofactor biosynthesis; pyridoxine 5'-phosphate biosynthesis; pyridoxine 5'-phosphate from D-erythrose 4-phosphate: step 5/5. Its function is as follows. Catalyzes the complicated ring closure reaction between the two acyclic compounds 1-deoxy-D-xylulose-5-phosphate (DXP) and 3-amino-2-oxopropyl phosphate (1-amino-acetone-3-phosphate or AAP) to form pyridoxine 5'-phosphate (PNP) and inorganic phosphate. The protein is Pyridoxine 5'-phosphate synthase of Trichlorobacter lovleyi (strain ATCC BAA-1151 / DSM 17278 / SZ) (Geobacter lovleyi).